The following is a 273-amino-acid chain: Tryptase-2 (273 aa).

A signal peptide spans 1–18 (MLHLLALALLLSLVSAAP). The propeptide at 19–28 (APGQALQRSG) is activation peptide. Positions 29-270 (IIGGKEAPGS…YLDWIHQYVP (242 aa)) constitute a Peptidase S1 domain. Residues Cys-57 and Cys-73 are joined by a disulfide bond. Catalysis depends on charge relay system residues His-72 and Asp-119. Cystine bridges form between Cys-153/Cys-228, Cys-186/Cys-209, and Cys-218/Cys-246. Ser-222 acts as the Charge relay system in catalysis. The N-linked (GlcNAc...) asparagine glycan is linked to Asn-231.

It belongs to the peptidase S1 family. Tryptase subfamily. As to quaternary structure, homotetramer.

It localises to the secreted. It catalyses the reaction Preferential cleavage: Arg-|-Xaa, Lys-|-Xaa, but with more restricted specificity than trypsin.. In terms of biological role, tryptase is the major neutral protease present in mast cells and is secreted upon the coupled activation-degranulation response of this cell type. In Ovis aries (Sheep), this protein is Tryptase-2.